We begin with the raw amino-acid sequence, 123 residues long: uncharacterized protein (123 aa).

The chain crosses the membrane as a helical span at residues 34–53; sequence LPFFFLFLGNLGKFFFLWPL.

The protein localises to the membrane. This is an uncharacterized protein from Saccharomyces cerevisiae (strain ATCC 204508 / S288c) (Baker's yeast).